Consider the following 315-residue polypeptide: 4-diphosphocytidyl-2-C-methyl-D-erythritol kinase (315 aa).

The active site involves lysine 26. 111–121 (PLAGGLAGGSA) is a binding site for ATP. Aspartate 153 is an active-site residue.

Belongs to the GHMP kinase family. IspE subfamily.

It catalyses the reaction 4-CDP-2-C-methyl-D-erythritol + ATP = 4-CDP-2-C-methyl-D-erythritol 2-phosphate + ADP + H(+). It functions in the pathway isoprenoid biosynthesis; isopentenyl diphosphate biosynthesis via DXP pathway; isopentenyl diphosphate from 1-deoxy-D-xylulose 5-phosphate: step 3/6. Functionally, catalyzes the phosphorylation of the position 2 hydroxy group of 4-diphosphocytidyl-2C-methyl-D-erythritol. The polypeptide is 4-diphosphocytidyl-2-C-methyl-D-erythritol kinase (Salinispora arenicola (strain CNS-205)).